We begin with the raw amino-acid sequence, 88 residues long: Phosphocarrier protein HPr (88 aa).

Positions 2-88 (AQKTFKVTAD…ETMKSEGLGE (87 aa)) constitute an HPr domain. Position 12 is a phosphoserine (Ser12). Residue His15 is the Pros-phosphohistidine intermediate; alternate of the active site. His15 bears the Tele-phosphohistidine; alternate mark. Position 46 is a phosphoserine; by HPrK/P (Ser46).

This sequence belongs to the HPr family. Phosphorylated during sporulation.

It localises to the cytoplasm. Phosphorylation on Ser-46 inhibits the phosphoryl transfer from enzyme I to HPr. General (non sugar-specific) component of the phosphoenolpyruvate-dependent sugar phosphotransferase system (sugar PTS). This major carbohydrate active-transport system catalyzes the phosphorylation of incoming sugar substrates concomitantly with their translocation across the cell membrane. The phosphoryl group from phosphoenolpyruvate (PEP) is transferred to the phosphoryl carrier protein HPr by enzyme I. Phospho-HPr then transfers it to the PTS EIIA domain. Functionally, P-Ser-HPr interacts with the catabolite control protein A (CcpA), forming a complex that binds to DNA at the catabolite response elements cre, operator sites preceding a large number of catabolite-regulated genes. Thus, P-Ser-HPr is a corepressor in carbon catabolite repression (CCR), a mechanism that allows bacteria to coordinate and optimize the utilization of available carbon sources. P-Ser-HPr also plays a role in inducer exclusion, in which it probably interacts with several non-PTS permeases and inhibits their transport activity. This chain is Phosphocarrier protein HPr (ptsH), found in Bacillus subtilis (strain 168).